The chain runs to 93 residues: Cell division protein CrgA (93 aa).

2 helical membrane passes run 31–51 (VWFV…LMVF) and 70–90 (LGPW…LLTM).

The protein belongs to the CrgA family.

Its subcellular location is the cell membrane. Involved in cell division. This Mycobacterium bovis (strain ATCC BAA-935 / AF2122/97) protein is Cell division protein CrgA.